The chain runs to 164 residues: Pheromone-binding protein 2 (164 aa).

The first 22 residues, 1 to 22 (MIRKVLLSVLLAVLMTINLGQA), serve as a signal peptide directing secretion. Disulfide bonds link cysteine 41–cysteine 76, cysteine 72–cysteine 130, and cysteine 119–cysteine 139.

The protein belongs to the PBP/GOBP family. Antenna.

Functionally, this major soluble protein in olfactory sensilla of male moths might serve to solubilize the extremely hydrophobic pheromone molecules and to transport pheromone through the aqueous lymph to receptors located on olfactory cilia. This Antheraea pernyi (Chinese oak silk moth) protein is Pheromone-binding protein 2.